A 120-amino-acid chain; its full sequence is Ribonuclease P protein component (120 aa).

This sequence belongs to the RnpA family. In terms of assembly, consists of a catalytic RNA component (M1 or rnpB) and a protein subunit.

The catalysed reaction is Endonucleolytic cleavage of RNA, removing 5'-extranucleotides from tRNA precursor.. RNaseP catalyzes the removal of the 5'-leader sequence from pre-tRNA to produce the mature 5'-terminus. It can also cleave other RNA substrates such as 4.5S RNA. The protein component plays an auxiliary but essential role in vivo by binding to the 5'-leader sequence and broadening the substrate specificity of the ribozyme. This Bordetella avium (strain 197N) protein is Ribonuclease P protein component.